The sequence spans 314 residues: uncharacterized protein (314 aa).

The region spanning 192 to 289 is the HTH araC/xylS-type domain; sequence TEVKLHIKDN…GSSPGLFRSL (98 aa). 2 consecutive DNA-binding regions (H-T-H motif) follow at residues 209–230 and 257–279; these read TDVASHFHISGRHLSRLFAAEL and IKEIAEEIGFSVHYFTRVFSAKI.

This is an uncharacterized protein from Bacillus subtilis (strain 168).